The primary structure comprises 112 residues: T cell receptor alpha variable 2 (112 aa).

A signal peptide spans 1-25 (MALQSTLGAVWLGLLLNSLWKVAES). An Ig-like domain is found at 26-112 (KDQVFQPSTV…DAAVYYCAVE (87 aa)). Cys47 and Cys109 are disulfide-bonded. Residues Asn48 and Asn84 are each glycosylated (N-linked (GlcNAc...) asparagine).

In terms of assembly, alpha-beta TR is a heterodimer composed of an alpha and beta chain; disulfide-linked. The alpha-beta TR is associated with the transmembrane signaling CD3 coreceptor proteins to form the TR-CD3 (TcR or TCR). The assembly of alpha-beta TR heterodimers with CD3 occurs in the endoplasmic reticulum where a single alpha-beta TR heterodimer associates with one CD3D-CD3E heterodimer, one CD3G-CD3E heterodimer and one CD247 homodimer forming a stable octameric structure. CD3D-CD3E and CD3G-CD3E heterodimers preferentially associate with TR alpha and TR beta chains, respectively. The association of the CD247 homodimer is the last step of TcR assembly in the endoplasmic reticulum and is required for transport to the cell surface.

It is found in the cell membrane. Functionally, v region of the variable domain of T cell receptor (TR) alpha chain that participates in the antigen recognition. Alpha-beta T cell receptors are antigen specific receptors which are essential to the immune response and are present on the cell surface of T lymphocytes. Recognize peptide-major histocompatibility (MH) (pMH) complexes that are displayed by antigen presenting cells (APC), a prerequisite for efficient T cell adaptive immunity against pathogens. Binding of alpha-beta TR to pMH complex initiates TR-CD3 clustering on the cell surface and intracellular activation of LCK that phosphorylates the ITAM motifs of CD3G, CD3D, CD3E and CD247 enabling the recruitment of ZAP70. In turn ZAP70 phosphorylates LAT, which recruits numerous signaling molecules to form the LAT signalosome. The LAT signalosome propagates signal branching to three major signaling pathways, the calcium, the mitogen-activated protein kinase (MAPK) kinase and the nuclear factor NF-kappa-B (NF-kB) pathways, leading to the mobilization of transcription factors that are critical for gene expression and essential for T cell growth and differentiation. The T cell repertoire is generated in the thymus, by V-(D)-J rearrangement. This repertoire is then shaped by intrathymic selection events to generate a peripheral T cell pool of self-MH restricted, non-autoaggressive T cells. Post-thymic interaction of alpha-beta TR with the pMH complexes shapes TR structural and functional avidity. This is T cell receptor alpha variable 2 from Homo sapiens (Human).